Consider the following 605-residue polypeptide: Dolichyl-diphosphooligosaccharide--protein glycosyltransferase subunit 1 (605 aa).

An N-terminal signal peptide occupies residues 1 to 22; the sequence is MEAPIVLLLLLWLALAPTPGSA. Residues 23 to 437 lie on the Lumenal side of the membrane; that stretch reads SSEAPPLVNE…FNKVLMLQEP (415 aa). At Lys185 the chain carries N6-acetyllysine. Asn297 is a glycosylation site (N-linked (GlcNAc...) asparagine). A helical membrane pass occupies residues 438-455; sequence LLVVAAFYILFFTVIIYV. Over 456–605 the chain is Cytoplasmic; the sequence is RLDFSITKDP…TKIDHILDAL (150 aa). At Lys536 the chain carries N6-acetyllysine; alternate. Lys536 is covalently cross-linked (Glycyl lysine isopeptide (Lys-Gly) (interchain with G-Cter in SUMO2); alternate).

This sequence belongs to the OST1 family. In terms of assembly, component of the oligosaccharyltransferase (OST) complex. OST exists in two different complex forms which contain common core subunits RPN1, RPN2, OST48, OST4, DAD1 and TMEM258, either STT3A or STT3B as catalytic subunits, and form-specific accessory subunits. STT3A complex assembly occurs through the formation of 3 subcomplexes. Subcomplex 1 contains RPN1 and TMEM258, subcomplex 2 contains the STT3A-specific subunits STT3A, DC2/OSTC, and KCP2 as well as the core subunit OST4, and subcomplex 3 contains RPN2, DAD1, and OST48. The STT3A complex can form stable complexes with the Sec61 complex or with both the Sec61 and TRAP complexes. Interacts with TMEM35A/NACHO. In terms of processing, ubiquitinated by the ECS(ASB11) complex. Post-translationally, ufmylated by UFL1 in response to endoplasmic reticulum stress, promoting reticulophagy of endoplasmic reticulum sheets. Expressed in all tissues tested.

It localises to the endoplasmic reticulum membrane. It functions in the pathway protein modification; protein glycosylation. In terms of biological role, subunit of the oligosaccharyl transferase (OST) complex that catalyzes the initial transfer of a defined glycan (Glc(3)Man(9)GlcNAc(2) in eukaryotes) from the lipid carrier dolichol-pyrophosphate to an asparagine residue within an Asn-X-Ser/Thr consensus motif in nascent polypeptide chains, the first step in protein N-glycosylation. N-glycosylation occurs cotranslationally and the complex associates with the Sec61 complex at the channel-forming translocon complex that mediates protein translocation across the endoplasmic reticulum (ER). All subunits are required for a maximal enzyme activity. This is Dolichyl-diphosphooligosaccharide--protein glycosyltransferase subunit 1 from Rattus norvegicus (Rat).